The following is a 253-amino-acid chain: UDP-Glc:alpha-D-GlcNAc-diphosphoundecaprenol beta-1,3-glucosyltransferase WfgD (253 aa).

It belongs to the glycosyltransferase 2 family. Mn(2+) is required as a cofactor. Mg(2+) serves as cofactor.

Its subcellular location is the cell inner membrane. The enzyme catalyses N-acetyl-alpha-D-glucosaminyl-di-trans,octa-cis-undecaprenyl diphosphate + UDP-alpha-D-glucose = beta-D-Glc-(1-&gt;3)-alpha-D-GlcNAc-di-trans,octa-cis-undecaprenyl diphosphate + UDP + H(+). Its pathway is bacterial outer membrane biogenesis; lipopolysaccharide biosynthesis. Functionally, catalyzes the addition of Glc, the second sugar moiety of the O152-antigen repeating unit, to GlcNAc-pyrophosphate-undecaprenol. This Escherichia coli protein is UDP-Glc:alpha-D-GlcNAc-diphosphoundecaprenol beta-1,3-glucosyltransferase WfgD (wfgD).